The sequence spans 454 residues: CBL-interacting protein kinase 17 (454 aa).

Positions 13–268 (YEMGRTLGEG…MAGIKSHEWF (256 aa)) constitute a Protein kinase domain. ATP-binding positions include 19 to 27 (LGEGNFGKV) and K42. D136 acts as the Proton acceptor in catalysis. The interval 154-183 (DFGLSALPQHLGNDGLLHTTCGSPNYIAPE) is activation loop. An NAF domain is found at 304–328 (KNSHQINAFQLIGMASSLDLSGFFE). Positions 334 to 363 (QRRIRFTSTHPPKDAFDKIESSATELGFQV) are PPI.

The protein belongs to the protein kinase superfamily. CAMK Ser/Thr protein kinase family. SNF1 subfamily. Requires Mn(2+) as cofactor.

The enzyme catalyses L-seryl-[protein] + ATP = O-phospho-L-seryl-[protein] + ADP + H(+). It carries out the reaction L-threonyl-[protein] + ATP = O-phospho-L-threonyl-[protein] + ADP + H(+). Functionally, CIPK serine-threonine protein kinases interact with CBL proteins. Binding of a CBL protein to the regulatory NAF domain of CIPK protein lead to the activation of the kinase in a calcium-dependent manner. The chain is CBL-interacting protein kinase 17 (CIPK17) from Oryza sativa subsp. japonica (Rice).